Here is a 638-residue protein sequence, read N- to C-terminus: Chaperone protein DnaK (638 aa).

T198 bears the Phosphothreonine; by autocatalysis mark. The interval 600–638 (KTQTEGGAQPGAEADGDTGAKGGEKVVDADFEEVKDDKK) is disordered. Over residues 628-638 (ADFEEVKDDKK) the composition is skewed to acidic residues.

It belongs to the heat shock protein 70 family.

Its function is as follows. Acts as a chaperone. The polypeptide is Chaperone protein DnaK (Geobacter metallireducens (strain ATCC 53774 / DSM 7210 / GS-15)).